A 100-amino-acid chain; its full sequence is Large ribosomal subunit protein uL23 (100 aa).

Belongs to the universal ribosomal protein uL23 family. In terms of assembly, part of the 50S ribosomal subunit. Contacts protein L29, and trigger factor when it is bound to the ribosome.

In terms of biological role, one of the early assembly proteins it binds 23S rRNA. One of the proteins that surrounds the polypeptide exit tunnel on the outside of the ribosome. Forms the main docking site for trigger factor binding to the ribosome. This Yersinia pestis bv. Antiqua (strain Antiqua) protein is Large ribosomal subunit protein uL23.